Reading from the N-terminus, the 365-residue chain is Phospho-N-acetylmuramoyl-pentapeptide-transferase (365 aa).

Helical transmembrane passes span 22–42, 74–94, 95–115, 133–153, 168–188, 201–221, 240–260, 267–287, 292–312, and 342–362; these read YISV…LALG, TMGG…WGDL, TSIY…IGFF, YKFA…FYLL, SLYI…IING, GLAI…AYIE, LAEV…FLWF, VFMG…IAVM, LIFF…MLQV, and KVVI…LAAI.

The protein belongs to the glycosyltransferase 4 family. MraY subfamily. Requires Mg(2+) as cofactor.

It localises to the cell inner membrane. It carries out the reaction UDP-N-acetyl-alpha-D-muramoyl-L-alanyl-gamma-D-glutamyl-meso-2,6-diaminopimeloyl-D-alanyl-D-alanine + di-trans,octa-cis-undecaprenyl phosphate = di-trans,octa-cis-undecaprenyl diphospho-N-acetyl-alpha-D-muramoyl-L-alanyl-D-glutamyl-meso-2,6-diaminopimeloyl-D-alanyl-D-alanine + UMP. It functions in the pathway cell wall biogenesis; peptidoglycan biosynthesis. Catalyzes the initial step of the lipid cycle reactions in the biosynthesis of the cell wall peptidoglycan: transfers peptidoglycan precursor phospho-MurNAc-pentapeptide from UDP-MurNAc-pentapeptide onto the lipid carrier undecaprenyl phosphate, yielding undecaprenyl-pyrophosphoryl-MurNAc-pentapeptide, known as lipid I. The chain is Phospho-N-acetylmuramoyl-pentapeptide-transferase from Francisella tularensis subsp. tularensis (strain FSC 198).